The following is a 374-amino-acid chain: Chaperone protein DnaJ (374 aa).

The J domain maps to 5 to 70 (DYYEILEIER…GKRQLYDRYG (66 aa)). The CR-type zinc-finger motif lies at 136-213 (GCKKEIKIRY…CNGKGHENKE (78 aa)). Positions 149, 152, 165, 168, 187, 190, 201, and 204 each coordinate Zn(2+). CXXCXGXG motif repeat units follow at residues 149-156 (CPDCKGTG), 165-172 (CPDCGGRG), 187-194 (CPKCGGSG), and 201-208 (CPKCNGKG).

This sequence belongs to the DnaJ family. As to quaternary structure, homodimer. Zn(2+) serves as cofactor.

The protein resides in the cytoplasm. Participates actively in the response to hyperosmotic and heat shock by preventing the aggregation of stress-denatured proteins and by disaggregating proteins, also in an autonomous, DnaK-independent fashion. Unfolded proteins bind initially to DnaJ; upon interaction with the DnaJ-bound protein, DnaK hydrolyzes its bound ATP, resulting in the formation of a stable complex. GrpE releases ADP from DnaK; ATP binding to DnaK triggers the release of the substrate protein, thus completing the reaction cycle. Several rounds of ATP-dependent interactions between DnaJ, DnaK and GrpE are required for fully efficient folding. Also involved, together with DnaK and GrpE, in the DNA replication of plasmids through activation of initiation proteins. In Wolinella succinogenes (strain ATCC 29543 / DSM 1740 / CCUG 13145 / JCM 31913 / LMG 7466 / NCTC 11488 / FDC 602W) (Vibrio succinogenes), this protein is Chaperone protein DnaJ.